The chain runs to 243 residues: CR(VI) reductase (243 aa).

Belongs to the flavin oxidoreductase frp family. The cofactor is FMN.

The chain is CR(VI) reductase (chrR) from Pseudomonas sp. (strain G-1).